Consider the following 147-residue polypeptide: 6-pyruvoyl tetrahydrobiopterin synthase (147 aa).

His26 serves as a coordination point for Zn(2+). Cys45 functions as the Proton acceptor in the catalytic mechanism. His51 and His53 together coordinate Zn(2+). Active-site charge relay system residues include His92 and Glu136.

This sequence belongs to the PTPS family. Homohexamer formed of two homotrimers in a head to head fashion. It depends on Zn(2+) as a cofactor.

It catalyses the reaction 7,8-dihydroneopterin 3'-triphosphate = 6-pyruvoyl-5,6,7,8-tetrahydropterin + triphosphate + H(+). It participates in cofactor biosynthesis; tetrahydrobiopterin biosynthesis; tetrahydrobiopterin from 7,8-dihydroneopterin triphosphate: step 1/3. Its function is as follows. Involved in the biosynthesis of tetrahydrobiopterin, an essential cofactor of aromatic amino acid hydroxylases. Catalyzes the transformation of 7,8-dihydroneopterin triphosphate into 6-pyruvoyl tetrahydropterin. This chain is 6-pyruvoyl tetrahydrobiopterin synthase (pts), found in Poecilia reticulata (Guppy).